We begin with the raw amino-acid sequence, 199 residues long: Ribonuclease HII (199 aa).

The RNase H type-2 domain occupies His-10–Asn-199. A divalent metal cation-binding residues include Asp-16, Glu-17, and Asp-108.

The protein belongs to the RNase HII family. It depends on Mn(2+) as a cofactor. The cofactor is Mg(2+).

The protein resides in the cytoplasm. The enzyme catalyses Endonucleolytic cleavage to 5'-phosphomonoester.. Functionally, endonuclease that specifically degrades the RNA of RNA-DNA hybrids. The sequence is that of Ribonuclease HII from Klebsiella pneumoniae subsp. pneumoniae (strain ATCC 700721 / MGH 78578).